The sequence spans 1054 residues: Topoisomerase 1-associated factor 1 (1054 aa).

Disordered stretches follow at residues 522-543, 823-846, 865-953, and 968-1054; these read KADDTGNVEDLESLPGEEHESA, RDDKERRGAGGDKEGSQDAEEDDE, EMFA…TINL, and VSDG…DDDE. The span at 823–838 shows a compositional bias: basic and acidic residues; it reads RDDKERRGAGGDKEGS. Residues 877–887 are compositionally biased toward basic residues; that stretch reads KTKQKLKRKGT. Basic and acidic residues-rich tracts occupy residues 890-901, 928-953, and 979-1017; these read STREREKQRDYT, ERDRKFFEKENELREELRKAEPTINL, and TESHKQYREKVDEDRDDLSHMAERENRQYDFGDEGHDSD.

The protein belongs to the timeless family. Component of the fork protection complex (FPC) consisting of TOF1 and CSM3.

Its subcellular location is the nucleus. Functionally, forms a fork protection complex (FPC) with CSM3 and which is required for chromosome segregation during meiosis and DNA damage repair. FPC coordinates leading and lagging strand synthesis and moves with the replication fork. FPC stabilizes replication forks in a configuration that is recognized by replication checkpoint sensors. This chain is Topoisomerase 1-associated factor 1 (TOF1), found in Yarrowia lipolytica (strain CLIB 122 / E 150) (Yeast).